Reading from the N-terminus, the 283-residue chain is Protein FAM78A (283 aa).

It belongs to the FAM78 family.

The protein is Protein FAM78A (Fam78a) of Mus musculus (Mouse).